Reading from the N-terminus, the 421-residue chain is UDP-N-acetylglucosamine 1-carboxyvinyltransferase 1 (421 aa).

22–23 (KN) is a binding site for phosphoenolpyruvate. Arg-95 is a UDP-N-acetyl-alpha-D-glucosamine binding site. Cys-119 (proton donor) is an active-site residue. Residue Cys-119 is modified to 2-(S-cysteinyl)pyruvic acid O-phosphothioketal. Residues 124 to 128 (RPIEQ), Asp-308, and Val-330 each bind UDP-N-acetyl-alpha-D-glucosamine.

The protein belongs to the EPSP synthase family. MurA subfamily.

It is found in the cytoplasm. The catalysed reaction is phosphoenolpyruvate + UDP-N-acetyl-alpha-D-glucosamine = UDP-N-acetyl-3-O-(1-carboxyvinyl)-alpha-D-glucosamine + phosphate. The protein operates within cell wall biogenesis; peptidoglycan biosynthesis. Cell wall formation. Adds enolpyruvyl to UDP-N-acetylglucosamine. This Staphylococcus aureus (strain MW2) protein is UDP-N-acetylglucosamine 1-carboxyvinyltransferase 1.